A 194-amino-acid polypeptide reads, in one-letter code: MISLLKKLYFTFSRSSRIIITLVIIDQLTKWWFINNLRWKPGLMLKVTSVLNMVYTWNYGISFGLMREYYQYSNTIFLITNMIIVCYLYYLMICSKTIGSFAGYSFVIGGAIGNLIDRFCRGAVFDFIHFHYRNYSFPVFNLADCFITLGVIILMEDYFSTKKVIEETSKGNYDNLQIEVMAEKIRHTDHDSKI.

2 helical membrane-spanning segments follow: residues 75 to 95 (TIFL…MICS) and 97 to 117 (TIGS…NLID). Catalysis depends on residues Asp-126 and Asp-144. A helical membrane pass occupies residues 135-155 (YSFPVFNLADCFITLGVIILM).

The protein belongs to the peptidase A8 family.

The protein resides in the cell inner membrane. It carries out the reaction Release of signal peptides from bacterial membrane prolipoproteins. Hydrolyzes -Xaa-Yaa-Zaa-|-(S,diacylglyceryl)Cys-, in which Xaa is hydrophobic (preferably Leu), and Yaa (Ala or Ser) and Zaa (Gly or Ala) have small, neutral side chains.. It functions in the pathway protein modification; lipoprotein biosynthesis (signal peptide cleavage). Functionally, this protein specifically catalyzes the removal of signal peptides from prolipoproteins. This chain is Lipoprotein signal peptidase, found in Rickettsia prowazekii (strain Madrid E).